The sequence spans 206 residues: Protein SUE1, mitochondrial (206 aa).

The N-terminal 24 residues, 1 to 24 (MILLKRTKIRGVSVSFVSLQRRTH), are a transit peptide targeting the mitochondrion.

The protein localises to the mitochondrion envelope. In terms of biological role, required for degradation of unstable forms of cytochrome c. The protein is Protein SUE1, mitochondrial of Saccharomyces cerevisiae (strain ATCC 204508 / S288c) (Baker's yeast).